The sequence spans 193 residues: Dual-action ribosomal maturation protein DarP (193 aa).

The span at 1-10 shows a compositional bias: basic and acidic residues; that stretch reads MRGRDEDTGE. 2 disordered regions span residues 1 to 20 and 171 to 193; these read MRGR…SQQR and QEQG…EDDE. Positions 181–193 are enriched in acidic residues; it reads GLEDGESALEDDE.

The protein belongs to the DarP family.

It localises to the cytoplasm. Member of a network of 50S ribosomal subunit biogenesis factors which assembles along the 30S-50S interface, preventing incorrect 23S rRNA structures from forming. Promotes peptidyl transferase center (PTC) maturation. This is Dual-action ribosomal maturation protein DarP from Xanthomonas oryzae pv. oryzae (strain KACC10331 / KXO85).